The following is a 123-amino-acid chain: Fluoride-specific ion channel FluC (123 aa).

A run of 4 helical transmembrane segments spans residues 5–25 (VWVA…YKFV), 33–53 (LATF…IGAF), 62–82 (LKLA…TFAA), and 94–114 (ITAF…VALG). Glycine 72 and serine 75 together coordinate Na(+).

This sequence belongs to the fluoride channel Fluc/FEX (TC 1.A.43) family.

Its subcellular location is the cell inner membrane. The catalysed reaction is fluoride(in) = fluoride(out). Na(+) is not transported, but it plays an essential structural role and its presence is essential for fluoride channel function. Fluoride-specific ion channel. Important for reducing fluoride concentration in the cell, thus reducing its toxicity. This chain is Fluoride-specific ion channel FluC, found in Ignicoccus hospitalis (strain KIN4/I / DSM 18386 / JCM 14125).